Consider the following 564-residue polypeptide: Proline--tRNA ligase (564 aa).

The protein belongs to the class-II aminoacyl-tRNA synthetase family. ProS type 1 subfamily. As to quaternary structure, homodimer.

Its subcellular location is the cytoplasm. It carries out the reaction tRNA(Pro) + L-proline + ATP = L-prolyl-tRNA(Pro) + AMP + diphosphate. Its function is as follows. Catalyzes the attachment of proline to tRNA(Pro) in a two-step reaction: proline is first activated by ATP to form Pro-AMP and then transferred to the acceptor end of tRNA(Pro). As ProRS can inadvertently accommodate and process non-cognate amino acids such as alanine and cysteine, to avoid such errors it has two additional distinct editing activities against alanine. One activity is designated as 'pretransfer' editing and involves the tRNA(Pro)-independent hydrolysis of activated Ala-AMP. The other activity is designated 'posttransfer' editing and involves deacylation of mischarged Ala-tRNA(Pro). The misacylated Cys-tRNA(Pro) is not edited by ProRS. This Coxiella burnetii (strain Dugway 5J108-111) protein is Proline--tRNA ligase.